We begin with the raw amino-acid sequence, 128 residues long: Large ribosomal subunit protein bL12 (128 aa).

Residues glycine 97 to lysine 128 are disordered. Residues glycine 105–leucine 118 are compositionally biased toward basic and acidic residues.

Belongs to the bacterial ribosomal protein bL12 family. Homodimer. Part of the ribosomal stalk of the 50S ribosomal subunit. Forms a multimeric L10(L12)X complex, where L10 forms an elongated spine to which 2 to 4 L12 dimers bind in a sequential fashion. Binds GTP-bound translation factors.

Its function is as follows. Forms part of the ribosomal stalk which helps the ribosome interact with GTP-bound translation factors. Is thus essential for accurate translation. In Lawsonia intracellularis (strain PHE/MN1-00), this protein is Large ribosomal subunit protein bL12.